Here is a 246-residue protein sequence, read N- to C-terminus: Anamorsin homolog (246 aa).

The segment at 1 to 124 (MRVVVVDLDG…ARGTAFSLKS (124 aa)) is N-terminal SAM-like domain. The tract at residues 125-158 (RAVRVVTADAGWGADADVDDELIDESALLTELDV) is linker. C168, C177, C180, and C182 together coordinate [2Fe-2S] cluster. A fe-S binding site A region spans residues 168–182 (CDVGAGKKACKNCTC). Residues C206, C209, C217, and C220 each contribute to the [4Fe-4S] cluster site. 2 consecutive short sequence motifs (cx2C motif) follow at residues 206–209 (CGNC) and 217–220 (CAGC). The interval 206–220 (CGNCALGDAFRCAGC) is fe-S binding site B.

It belongs to the anamorsin family. As to quaternary structure, monomer. [2Fe-2S] cluster serves as cofactor. [4Fe-4S] cluster is required as a cofactor.

The protein localises to the cytoplasm. The protein resides in the mitochondrion intermembrane space. In terms of biological role, component of the cytosolic iron-sulfur (Fe-S) protein assembly (CIA) machinery. Required for the maturation of extramitochondrial Fe-S proteins. Part of an electron transfer chain functioning in an early step of cytosolic Fe-S biogenesis, facilitating the de novo assembly of a [4Fe-4S] cluster on the cytosolic Fe-S scaffold complex. Electrons are transferred from NADPH via a FAD- and FMN-containing diflavin oxidoreductase. Together with the diflavin oxidoreductase, also required for the assembly of the diferric tyrosyl radical cofactor of ribonucleotide reductase (RNR), probably by providing electrons for reduction during radical cofactor maturation in the catalytic small subunit. The polypeptide is Anamorsin homolog (Ostreococcus tauri).